Reading from the N-terminus, the 354-residue chain is Fructose-bisphosphate aldolase (354 aa).

Ser50 lines the D-glyceraldehyde 3-phosphate pocket. Catalysis depends on Asp83, which acts as the Proton donor. Residues His84, Asp105, Glu142, and His198 each contribute to the Zn(2+) site. Gly199 is a binding site for dihydroxyacetone phosphate. Residue His232 participates in Zn(2+) binding. Dihydroxyacetone phosphate contacts are provided by residues 233 to 235 (GSS) and 275 to 278 (NIDT).

This sequence belongs to the class II fructose-bisphosphate aldolase family. It depends on Zn(2+) as a cofactor.

It catalyses the reaction beta-D-fructose 1,6-bisphosphate = D-glyceraldehyde 3-phosphate + dihydroxyacetone phosphate. It functions in the pathway carbohydrate degradation; glycolysis; D-glyceraldehyde 3-phosphate and glycerone phosphate from D-glucose: step 4/4. In terms of biological role, catalyzes the aldol condensation of dihydroxyacetone phosphate (DHAP or glycerone-phosphate) with glyceraldehyde 3-phosphate (G3P) to form fructose 1,6-bisphosphate (FBP) in gluconeogenesis and the reverse reaction in glycolysis. This is Fructose-bisphosphate aldolase (fba) from Pseudomonas aeruginosa (strain ATCC 15692 / DSM 22644 / CIP 104116 / JCM 14847 / LMG 12228 / 1C / PRS 101 / PAO1).